A 138-amino-acid chain; its full sequence is MRILCLDIGNSRVGVAISDPLKITAQPVMTIELRNKDLFEELDKIFQGYNIEKVVIGYPLSKLHPDQKDEKLKKIDEISEKIGSRYNVEIVKWDERFSTKAVERVIDEELNWKRKKKIIDKVAAVYILQGYLDFYNGS.

The protein belongs to the YqgF nuclease family.

It localises to the cytoplasm. Functionally, could be a nuclease involved in processing of the 5'-end of pre-16S rRNA. This chain is Putative pre-16S rRNA nuclease, found in Caldicellulosiruptor bescii (strain ATCC BAA-1888 / DSM 6725 / KCTC 15123 / Z-1320) (Anaerocellum thermophilum).